The chain runs to 274 residues: Formamidopyrimidine-DNA glycosylase (274 aa).

Residue Pro-2 is the Schiff-base intermediate with DNA of the active site. The active-site Proton donor is the Glu-3. The active-site Proton donor; for beta-elimination activity is Lys-59. The DNA site is built by His-93, Arg-112, and Lys-153. Residues 238-272 form an FPG-type zinc finger; it reads QVHTKFNKPCPNCGELIQKIKLGGRGTYFCKKCQQ. The active-site Proton donor; for delta-elimination activity is Arg-262.

This sequence belongs to the FPG family. As to quaternary structure, monomer. Requires Zn(2+) as cofactor.

It catalyses the reaction Hydrolysis of DNA containing ring-opened 7-methylguanine residues, releasing 2,6-diamino-4-hydroxy-5-(N-methyl)formamidopyrimidine.. The enzyme catalyses 2'-deoxyribonucleotide-(2'-deoxyribose 5'-phosphate)-2'-deoxyribonucleotide-DNA = a 3'-end 2'-deoxyribonucleotide-(2,3-dehydro-2,3-deoxyribose 5'-phosphate)-DNA + a 5'-end 5'-phospho-2'-deoxyribonucleoside-DNA + H(+). Involved in base excision repair of DNA damaged by oxidation or by mutagenic agents. Acts as a DNA glycosylase that recognizes and removes damaged bases. Has a preference for oxidized purines, such as 7,8-dihydro-8-oxoguanine (8-oxoG). Has AP (apurinic/apyrimidinic) lyase activity and introduces nicks in the DNA strand. Cleaves the DNA backbone by beta-delta elimination to generate a single-strand break at the site of the removed base with both 3'- and 5'-phosphates. This is Formamidopyrimidine-DNA glycosylase from Mycoplasma mobile (strain ATCC 43663 / 163K / NCTC 11711) (Mesomycoplasma mobile).